The sequence spans 221 residues: Holliday junction branch migration complex subunit RuvA (221 aa).

The segment at 1–61 (MQIYQFGKIV…DYTKITYGFA (61 aa)) is domain I. Residues 62 to 139 (SFRERILFED…RFNENHKNQT (78 aa)) form a domain II region. The disordered stretch occupies residues 133 to 155 (ENHKNQTEETNQDSQEKELEKKD). Residues 140 to 166 (EETNQDSQEKELEKKDDLADITIQKSN) form a flexible linker region. Residues 146 to 155 (SQEKELEKKD) show a composition bias toward basic and acidic residues. The interval 167 to 221 (LEDKTAANLEDTLKMLGFKPRQIDYALTKVEPNENFENLIENAIKIISNAREFRN) is domain III.

It belongs to the RuvA family. In terms of assembly, homotetramer. Forms an RuvA(8)-RuvB(12)-Holliday junction (HJ) complex. HJ DNA is sandwiched between 2 RuvA tetramers; dsDNA enters through RuvA and exits via RuvB. An RuvB hexamer assembles on each DNA strand where it exits the tetramer. Each RuvB hexamer is contacted by two RuvA subunits (via domain III) on 2 adjacent RuvB subunits; this complex drives branch migration. In the full resolvosome a probable DNA-RuvA(4)-RuvB(12)-RuvC(2) complex forms which resolves the HJ.

It is found in the cytoplasm. Functionally, the RuvA-RuvB-RuvC complex processes Holliday junction (HJ) DNA during genetic recombination and DNA repair, while the RuvA-RuvB complex plays an important role in the rescue of blocked DNA replication forks via replication fork reversal (RFR). RuvA specifically binds to HJ cruciform DNA, conferring on it an open structure. The RuvB hexamer acts as an ATP-dependent pump, pulling dsDNA into and through the RuvAB complex. HJ branch migration allows RuvC to scan DNA until it finds its consensus sequence, where it cleaves and resolves the cruciform DNA. The sequence is that of Holliday junction branch migration complex subunit RuvA from Mesomycoplasma hyopneumoniae (strain J / ATCC 25934 / NCTC 10110) (Mycoplasma hyopneumoniae).